The following is a 116-amino-acid chain: Aspartate 1-decarboxylase (116 aa).

Serine 25 serves as the catalytic Schiff-base intermediate with substrate; via pyruvic acid. At serine 25 the chain carries Pyruvic acid (Ser). Threonine 57 contributes to the substrate binding site. Catalysis depends on tyrosine 58, which acts as the Proton donor. Residue 73–75 (GAA) coordinates substrate.

It belongs to the PanD family. Heterooctamer of four alpha and four beta subunits. Pyruvate is required as a cofactor. In terms of processing, is synthesized initially as an inactive proenzyme, which is activated by self-cleavage at a specific serine bond to produce a beta-subunit with a hydroxyl group at its C-terminus and an alpha-subunit with a pyruvoyl group at its N-terminus.

The protein localises to the cytoplasm. The catalysed reaction is L-aspartate + H(+) = beta-alanine + CO2. Its pathway is cofactor biosynthesis; (R)-pantothenate biosynthesis; beta-alanine from L-aspartate: step 1/1. Its function is as follows. Catalyzes the pyruvoyl-dependent decarboxylation of aspartate to produce beta-alanine. The polypeptide is Aspartate 1-decarboxylase (Christiangramia forsetii (strain DSM 17595 / CGMCC 1.15422 / KT0803) (Gramella forsetii)).